Here is a 157-residue protein sequence, read N- to C-terminus: CAPA peptides (157 aa).

The signal sequence occupies residues 1 to 21 (MQPTMRIIVSMALLAYAVASA). Residues 22-28 (YHSNVKL) constitute a propeptide that is removed on maturation. Residue valine 42 is modified to Valine amide. Residues 45–66 (ASGNTWQLPLNDLYPEYEPAQV) constitute a propeptide that is removed on maturation. At glutamine 69 the chain carries Pyrrolidone carboxylic acid; partial. Valine 76 carries the post-translational modification Valine amide. Leucine amide occurs at positions 85 and 117. The propeptide occupies 120-157 (AFKNDDDEITIQNESNDHSEPEQTELIHEDRRKRQTLN). Residues 131–157 (QNESNDHSEPEQTELIHEDRRKRQTLN) are disordered. Residues 134 to 151 (SNDHSEPEQTELIHEDRR) show a composition bias toward basic and acidic residues.

This sequence belongs to the pyrokinin family. As to expression, CAPA-periviscerokinin 1: Expressed in corpora cardiaca (CC), corpora allata (CA), antennal lobe (AL) and gnathal ganglion (GNG) (at protein level). Expression detected in most animals in CC and CA and in some animals in AL and GNG (at protein level). CAPA-periviscerokinin 2: Expressed in corpora cardiaca (CC), corpora allata (CA), antennal lobe (AL) and gnathal ganglion (GNG) (at protein level). For non-pyroglutamate form, expression in AL detected in all animals, in CC, CA and GNG in most animals (at protein level). For pyroglutamate form, expression in CC and CA detected in most animals, in AL and GNG in some animals (at protein level). CAPA-periviscerokinin 3: Expressed in corpora cardiaca (CC), corpora allata (CA), antennal lobe (AL) and gnathal ganglion (GNG). Expression detected in most animals in CC and CA and in some animals in AL and GNG (at protein level). CAPA-precursor-related peptide 3: Expressed in corpora cardiaca (CC), corpora allata (CA), antennal lobe (AL) and gnathal ganglion (GNG) (at protein level). Expression in CC and CA detected in some animals, expression in Al and GNG detected in few animals (at protein level). CAPA-trypto-pyrokinin: Expressed in corpora cardiaca (CC), corpora allata (CA), antennal lobe (AL) and gnathal ganglion (GNG) (at protein level). Expression in CC, CA and GNG detected in most animals, in AL in some animals (at protein level).

It localises to the secreted. Functionally, myoactive. This Agrotis ipsilon (Black cutworm moth) protein is CAPA peptides.